A 761-amino-acid polypeptide reads, in one-letter code: 52 kDa repressor of the inhibitor of the protein kinase (761 aa).

The THAP-type zinc finger occupies 1-86 (MPNFCAAPNC…LRDNAIPTIF (86 aa)). A compositionally biased stretch (basic and acidic residues) spans 116 to 132 (QKKIDETSEQEQKHKET). The disordered stretch occupies residues 116 to 149 (QKKIDETSEQEQKHKETNNSNAQNPSEEEGEGQD). Ser-566 bears the Phosphoserine mark.

Interacts with DNAJC3, probably sequestring it.

Its function is as follows. Upstream regulator of interferon-induced serine/threonine protein kinase R (PKR). May block the PKR-inhibitory function of DNAJC3, resulting in restoration of kinase activity and suppression of cell growth. This Homo sapiens (Human) protein is 52 kDa repressor of the inhibitor of the protein kinase.